The primary structure comprises 487 residues: ATP synthase subunit beta 1 (487 aa).

162–169 (GGAGVGKT) is a binding site for ATP.

Belongs to the ATPase alpha/beta chains family. In terms of assembly, F-type ATPases have 2 components, CF(1) - the catalytic core - and CF(0) - the membrane proton channel. CF(1) has five subunits: alpha(3), beta(3), gamma(1), delta(1), epsilon(1). CF(0) has three main subunits: a(1), b(2) and c(9-12). The alpha and beta chains form an alternating ring which encloses part of the gamma chain. CF(1) is attached to CF(0) by a central stalk formed by the gamma and epsilon chains, while a peripheral stalk is formed by the delta and b chains.

The protein resides in the cell inner membrane. It carries out the reaction ATP + H2O + 4 H(+)(in) = ADP + phosphate + 5 H(+)(out). Produces ATP from ADP in the presence of a proton gradient across the membrane. The catalytic sites are hosted primarily by the beta subunits. This is ATP synthase subunit beta 1 from Gluconobacter oxydans (strain 621H) (Gluconobacter suboxydans).